A 394-amino-acid chain; its full sequence is Ornithine aminotransferase 1 (394 aa).

Lysine 252 is modified (N6-(pyridoxal phosphate)lysine).

This sequence belongs to the class-III pyridoxal-phosphate-dependent aminotransferase family. OAT subfamily. It depends on pyridoxal 5'-phosphate as a cofactor.

The protein localises to the cytoplasm. The catalysed reaction is a 2-oxocarboxylate + L-ornithine = L-glutamate 5-semialdehyde + an L-alpha-amino acid. Its pathway is amino-acid biosynthesis; L-proline biosynthesis; L-glutamate 5-semialdehyde from L-ornithine: step 1/1. In terms of biological role, catalyzes the interconversion of ornithine to glutamate semialdehyde. This chain is Ornithine aminotransferase 1, found in Staphylococcus saprophyticus subsp. saprophyticus (strain ATCC 15305 / DSM 20229 / NCIMB 8711 / NCTC 7292 / S-41).